A 147-amino-acid chain; its full sequence is 3-dehydroquinate dehydratase (147 aa).

Y24 functions as the Proton acceptor in the catalytic mechanism. Substrate-binding residues include N75, H81, and D88. Catalysis depends on H101, which acts as the Proton donor. Substrate is bound by residues 102 to 103 (IS) and R112.

This sequence belongs to the type-II 3-dehydroquinase family. Homododecamer.

It carries out the reaction 3-dehydroquinate = 3-dehydroshikimate + H2O. Its pathway is metabolic intermediate biosynthesis; chorismate biosynthesis; chorismate from D-erythrose 4-phosphate and phosphoenolpyruvate: step 3/7. In terms of biological role, catalyzes a trans-dehydration via an enolate intermediate. The sequence is that of 3-dehydroquinate dehydratase from Cereibacter sphaeroides (strain ATCC 17029 / ATH 2.4.9) (Rhodobacter sphaeroides).